The primary structure comprises 72 residues: Aurein-2.5 (72 aa).

The first 22 residues, 1–22, serve as a signal peptide directing secretion; that stretch reads MAFLKKSLFLVLFLGLVSLSIC. A propeptide spanning residues 23–49 is cleaved from the precursor; it reads EKEKRQNEEDEDENEAANHEEGSEEKR. A disordered region spans residues 27-47; the sequence is RQNEEDEDENEAANHEEGSEE. Residues 38–47 are compositionally biased toward basic and acidic residues; that stretch reads AANHEEGSEE. L65 is modified (leucine amide). Residues 69-72 constitute a propeptide that is removed on maturation; sequence NDLE.

This sequence belongs to the frog skin active peptide (FSAP) family. Aurein subfamily. May be monomeric or may oligomerize as homodimers or homotrimers in Gram-positive and Gram-negative bacteria mimetic membranes. Post-translationally, C-terminal amidation enhances antibacterial activity. This increase may be due to stabilization of the alpha-helical structure at the membrane interface. Expressed by the skin dorsal glands.

The protein localises to the secreted. The protein resides in the target cell membrane. Amphipathic alpha-helical antimicrobial peptide with moderate to potent activity against Gram-positive bacteria, Gram-negative bacteria and fungi. Also shows a weak activity against biofilm of both Gram-positive and Gram-negative bacteria. Probably acts by disturbing membrane functions with its amphipathic structure. Kills fungi via membranolytic action. Enhanced sterol levels in lipid composition membranes reduce interaction of this peptide with membranes, having a protective effect against the lytic ability of the peptide. Shows anticancer activity. This chain is Aurein-2.5, found in Ranoidea aurea (Green and golden bell frog).